The chain runs to 438 residues: Adenylyltransferase and sulfurtransferase MOCS3 (438 aa).

ATP contacts are provided by residues Gly-80, Asp-101, 108 to 112, Lys-125, and 169 to 170; these read TNLHR and DN. Zn(2+)-binding residues include Cys-210 and Cys-213. The active-site Glycyl thioester intermediate; for adenylyltransferase activity is the Cys-227. Residues Cys-285 and Cys-288 each contribute to the Zn(2+) site. The 102-residue stretch at 335–436 folds into the Rhodanese domain; sequence SKQRHVLVDV…WTRNVDKEFP (102 aa). The active-site Cysteine persulfide intermediate; for sulfurtransferase activity is Cys-392.

In the N-terminal section; belongs to the HesA/MoeB/ThiF family. UBA4 subfamily. Zn(2+) is required as a cofactor.

Its subcellular location is the cytoplasm. The protein localises to the cytosol. It carries out the reaction [molybdopterin-synthase sulfur-carrier protein]-C-terminal Gly-Gly + ATP + H(+) = [molybdopterin-synthase sulfur-carrier protein]-C-terminal Gly-Gly-AMP + diphosphate. The catalysed reaction is [molybdopterin-synthase sulfur-carrier protein]-C-terminal Gly-Gly-AMP + S-sulfanyl-L-cysteinyl-[cysteine desulfurase] + AH2 = [molybdopterin-synthase sulfur-carrier protein]-C-terminal-Gly-aminoethanethioate + L-cysteinyl-[cysteine desulfurase] + A + AMP + 2 H(+). Its pathway is tRNA modification; 5-methoxycarbonylmethyl-2-thiouridine-tRNA biosynthesis. The protein operates within cofactor biosynthesis; molybdopterin biosynthesis. In terms of biological role, plays a central role in 2-thiolation of mcm(5)S(2)U at tRNA wobble positions of cytosolic tRNA(Lys), tRNA(Glu) and tRNA(Gln). Also essential during biosynthesis of the molybdenum cofactor. Acts by mediating the C-terminal thiocarboxylation of sulfur carriers URM1 and MOCS2A. Its N-terminus first activates URM1 and MOCS2A as acyl-adenylates (-COAMP), then the persulfide sulfur on the catalytic cysteine is transferred to URM1 and MOCS2A to form thiocarboxylation (-COSH) of their C-terminus. The reaction probably involves hydrogen sulfide that is generated from the persulfide intermediate and that acts as a nucleophile towards URM1 and MOCS2A. Subsequently, a transient disulfide bond is formed. Does not use thiosulfate as sulfur donor; NFS1 probably acting as a sulfur donor for thiocarboxylation reactions. The protein is Adenylyltransferase and sulfurtransferase MOCS3 of Culex quinquefasciatus (Southern house mosquito).